The following is a 490-amino-acid chain: Cytochrome P450 71A21 (490 aa).

Residues 1 to 21 (MESMTMIILQSLIIFITILFF) form a helical membrane-spanning segment. Cys432 contacts heme.

The protein belongs to the cytochrome P450 family. Heme is required as a cofactor.

The protein localises to the membrane. The chain is Cytochrome P450 71A21 (CYP71A21) from Arabidopsis thaliana (Mouse-ear cress).